The following is a 204-amino-acid chain: Large ribosomal subunit protein bL25 (204 aa).

The protein belongs to the bacterial ribosomal protein bL25 family. CTC subfamily. Part of the 50S ribosomal subunit; part of the 5S rRNA/L5/L18/L25 subcomplex. Contacts the 5S rRNA. Binds to the 5S rRNA independently of L5 and L18.

In terms of biological role, this is one of the proteins that binds to the 5S RNA in the ribosome where it forms part of the central protuberance. This chain is Large ribosomal subunit protein bL25, found in Pseudomonas aeruginosa (strain LESB58).